The sequence spans 57 residues: Small ribosomal subunit protein bS21 (57 aa).

Positions 22–57 (QCSKSGVLSEAKKRKHYEKPSEKRKRKATEKRNSRK) are disordered. Basic residues predominate over residues 33–57 (KKRKHYEKPSEKRKRKATEKRNSRK).

Belongs to the bacterial ribosomal protein bS21 family.

The sequence is that of Small ribosomal subunit protein bS21 from Natranaerobius thermophilus (strain ATCC BAA-1301 / DSM 18059 / JW/NM-WN-LF).